A 77-amino-acid chain; its full sequence is Sec-independent protein translocase protein TatA (77 aa).

Residues 1–21 (MGSLSIWHWIVVIAVVLLLFG) form a helical membrane-spanning segment. Basic and acidic residues predominate over residues 43–60 (MQDDDKAPEKTEPVKSID). The disordered stretch occupies residues 43 to 77 (MQDDDKAPEKTEPVKSIDHGATPSATRTDVGSKAV).

It belongs to the TatA/E family. As to quaternary structure, the Tat system comprises two distinct complexes: a TatABC complex, containing multiple copies of TatA, TatB and TatC subunits, and a separate TatA complex, containing only TatA subunits. Substrates initially bind to the TatABC complex, which probably triggers association of the separate TatA complex to form the active translocon.

It is found in the cell inner membrane. Part of the twin-arginine translocation (Tat) system that transports large folded proteins containing a characteristic twin-arginine motif in their signal peptide across membranes. TatA could form the protein-conducting channel of the Tat system. This Bradyrhizobium sp. (strain BTAi1 / ATCC BAA-1182) protein is Sec-independent protein translocase protein TatA.